A 94-amino-acid chain; its full sequence is PqqA binding protein (94 aa).

It belongs to the PqqD family. As to quaternary structure, monomer. Interacts with PqqE.

Its pathway is cofactor biosynthesis; pyrroloquinoline quinone biosynthesis. Functionally, functions as a PqqA binding protein and presents PqqA to PqqE, in the pyrroloquinoline quinone (PQQ) biosynthetic pathway. The sequence is that of PqqA binding protein from Pseudomonas syringae pv. syringae (strain B728a).